A 188-amino-acid polypeptide reads, in one-letter code: Accessory gene regulator protein B (188 aa).

4 helical membrane passes run 49-69 (VALIFHTFLYTLFTHVSYFLV), 100-122 (VYFQVNLGIMYSVVAIGTVLIIY), 143-163 (LLSIIITMVLLIISFLAPEPF), and 164-184 (KQLILLGITLESITLLPIFFP).

It belongs to the AgrB family.

The protein localises to the cell membrane. Its function is as follows. Essential for the production of a quorum sensing system signal molecule, the autoinducing peptide (AIP). This quorum sensing system is responsible for the regulation of the expression of virulence factor genes. Involved in the proteolytic processing of AgrD, the precursor of AIP. The chain is Accessory gene regulator protein B from Staphylococcus haemolyticus (strain JCSC1435).